Reading from the N-terminus, the 342-residue chain is ATP-dependent (S)-NAD(P)H-hydrate dehydratase (342 aa).

The 327-residue stretch at 11–337 (ILPALEKVVP…EYLGHRLFTF (327 aa)) folds into the YjeF C-terminal domain. Residues Gly127 and 180 to 186 (NVMEHKR) contribute to the (6S)-NADPHX site. ATP is bound by residues 229–233 (KGKTD) and 248–257 (GSPRRCGGQG). Residue Asp258 coordinates (6S)-NADPHX.

It belongs to the NnrD/CARKD family. Mg(2+) serves as cofactor.

It catalyses the reaction (6S)-NADHX + ATP = ADP + phosphate + NADH + H(+). The enzyme catalyses (6S)-NADPHX + ATP = ADP + phosphate + NADPH + H(+). Functionally, catalyzes the dehydration of the S-form of NAD(P)HX at the expense of ATP, which is converted to ADP. Together with NAD(P)HX epimerase, which catalyzes the epimerization of the S- and R-forms, the enzyme allows the repair of both epimers of NAD(P)HX, a damaged form of NAD(P)H that is a result of enzymatic or heat-dependent hydration. The polypeptide is ATP-dependent (S)-NAD(P)H-hydrate dehydratase (Physcomitrium patens (Spreading-leaved earth moss)).